Consider the following 62-residue polypeptide: MTTQKQLKVTQKRSTVGRIASHKACVAGLGLRRINHSVVVADTPENRGMINKVAYLLEVEEC.

Belongs to the universal ribosomal protein uL30 family. In terms of assembly, part of the 50S ribosomal subunit.

In Alkalilimnicola ehrlichii (strain ATCC BAA-1101 / DSM 17681 / MLHE-1), this protein is Large ribosomal subunit protein uL30.